A 254-amino-acid chain; its full sequence is K88 minor fimbrial subunit FaeI (254 aa).

The signal sequence occupies residues 1 to 20 (MKKVTLFLFVVSLLPSTVLA).

It belongs to the fimbrial K88 protein family.

It localises to the fimbrium. In terms of biological role, K88 minor fimbrial subunit, plays an essential role in the biogenesis of the K88 fimbriae. Fimbriae (also called pili), are polar filaments radiating from the surface of the bacterium to a length of 0.5-1.5 micrometers and numbering 100-300 per cell. They enable bacteria to colonize the epithelium of specific host organs. This chain is K88 minor fimbrial subunit FaeI (faeI), found in Escherichia coli.